Consider the following 607-residue polypeptide: MFGYWGKILRVNLSDGTIKEETFNEEFAKKWLGTRGFGIYFLLKEMDPKIDPFSPENKLIFATGPLTGTSAPTGGRYMVITKSPLTGYIAMANSGGYFGAELKFAGWDAIIVEGKADHPVYIYINDENVEIRDASKVWGKLVSETERMLKEEVGDKHVQIASIGPAGENKVRFAAVMNNGHRAAGRGGVGAVMGSKNLKAIVVRGHKRVEVADKGKFMEVIREKIEKLRKDPVAGGGLPKYGTAVLVNIINEHGLYPTRNFQTGVFKYAYEQSGEAMAAKYLVRNKPCFACPIGCGRVNYLPSIGETEGPEYESTWALGANLGINDLASIIEANHFADEYGMDTISLGGTLATAMELYERGLIKQEDIGGENEPPFRFGNTEVLHYWIHKIAKREGFGDILAEGGYRLAEKFNGLEYFMGVKKQELPAYDPRGAEGHGLGYATNNRGGCHIKQYMISPEILGYPYKMDPHDISDEKVKMVILFQDLTAVIDAAGLCIFTTFGLGADDYTDMLNAALGWDFSTDDYLKIGERIWNAERLFNLKAGLDPLKEDTLPKRFLEEPMPEGPNKGHVVRLKEMLPRYYKLRGWTEDGRIPEEKLKELGLEEFM.

Tungstopterin contacts are provided by R76, N93, G95, R182, A183, G185, and R186. Residues C288, C291, and C295 each coordinate [4Fe-4S] cluster. Tungstopterin-binding residues include D338, D343, R446, K452, D491, and L495. [4Fe-4S] cluster is bound at residue C496. Residue I497 coordinates tungstopterin.

The protein belongs to the AOR/FOR family. As to quaternary structure, homodimer. [4Fe-4S] cluster serves as cofactor. Tungstopterin is required as a cofactor.

It catalyses the reaction an aldehyde + 2 oxidized [2Fe-2S]-[ferredoxin] + H2O = a carboxylate + 2 reduced [2Fe-2S]-[ferredoxin] + 3 H(+). The polypeptide is Tungsten-containing aldehyde ferredoxin oxidoreductase (aor) (Pyrococcus horikoshii (strain ATCC 700860 / DSM 12428 / JCM 9974 / NBRC 100139 / OT-3)).